We begin with the raw amino-acid sequence, 428 residues long: tRNA(Ile)-lysidine synthase (428 aa).

Residue Ser28–Ser33 coordinates ATP.

The protein belongs to the tRNA(Ile)-lysidine synthase family.

Its subcellular location is the cytoplasm. The enzyme catalyses cytidine(34) in tRNA(Ile2) + L-lysine + ATP = lysidine(34) in tRNA(Ile2) + AMP + diphosphate + H(+). In terms of biological role, ligates lysine onto the cytidine present at position 34 of the AUA codon-specific tRNA(Ile) that contains the anticodon CAU, in an ATP-dependent manner. Cytidine is converted to lysidine, thus changing the amino acid specificity of the tRNA from methionine to isoleucine. In Streptococcus pyogenes serotype M1, this protein is tRNA(Ile)-lysidine synthase.